A 131-amino-acid polypeptide reads, in one-letter code: Holo-[acyl-carrier-protein] synthase (131 aa).

Mg(2+)-binding residues include Asp-8 and Glu-57.

This sequence belongs to the P-Pant transferase superfamily. AcpS family. It depends on Mg(2+) as a cofactor.

It localises to the cytoplasm. It carries out the reaction apo-[ACP] + CoA = holo-[ACP] + adenosine 3',5'-bisphosphate + H(+). Functionally, transfers the 4'-phosphopantetheine moiety from coenzyme A to a Ser of acyl-carrier-protein. This chain is Holo-[acyl-carrier-protein] synthase, found in Desulforudis audaxviator (strain MP104C).